A 394-amino-acid chain; its full sequence is NAD(P)H-quinone oxidoreductase subunit H (394 aa).

This sequence belongs to the complex I 49 kDa subunit family. In terms of assembly, NDH-1 can be composed of about 15 different subunits; different subcomplexes with different compositions have been identified which probably have different functions.

The protein resides in the cellular thylakoid membrane. The enzyme catalyses a plastoquinone + NADH + (n+1) H(+)(in) = a plastoquinol + NAD(+) + n H(+)(out). It catalyses the reaction a plastoquinone + NADPH + (n+1) H(+)(in) = a plastoquinol + NADP(+) + n H(+)(out). In terms of biological role, NDH-1 shuttles electrons from an unknown electron donor, via FMN and iron-sulfur (Fe-S) centers, to quinones in the respiratory and/or the photosynthetic chain. The immediate electron acceptor for the enzyme in this species is believed to be plastoquinone. Couples the redox reaction to proton translocation, and thus conserves the redox energy in a proton gradient. Cyanobacterial NDH-1 also plays a role in inorganic carbon-concentration. This chain is NAD(P)H-quinone oxidoreductase subunit H, found in Acaryochloris marina (strain MBIC 11017).